A 1363-amino-acid chain; its full sequence is Spike glycoprotein (1363 aa).

The signal sequence occupies residues 1 to 13 (MFLILLISLPMAF). Over 14 to 1307 (AVIGDLKCTT…GTYEYYVKWP (1294 aa)) the chain is Extracellular. Residues 15–298 (VIGDLKCTTV…DFMSEIKCKT (284 aa)) enclose the BetaCoV S1-NTD domain. 5 disulfides stabilise this stretch: Cys21–Cys165, Cys160–Cys193, Cys172–Cys252, Cys286–Cys296, and Cys331–Cys356. Asn59 and Asn133 each carry an N-linked (GlcNAc...) asparagine; by host glycan. N-linked (GlcNAc...) asparagine; by host glycosylation is present at Asn198. One can recognise a BetaCoV S1-CTD domain in the interval 329–617 (PDCNIEAWLN…DVNSGTTCST (289 aa)). Residue Asn359 is glycosylated (N-linked (GlcNAc...) asparagine; by host). Intrachain disulfides connect Cys374-Cys427 and Cys386-Cys615. Asn437, Asn649, Asn676, Asn696, Asn714, Asn739, and Asn788 each carry an N-linked (GlcNAc...) asparagine; by host glycan. Fusion peptide stretches follow at residues 914-935 (SAIEDLLFSKVKLSDVGFVEAY) and 933-953 (EAYNNCTGGAEIRDLICVQSY). Residue Asn937 is glycosylated (N-linked (GlcNAc...) asparagine; by host). Cysteines 938 and 949 form a disulfide. The tract at residues 1014 to 1064 (QKLIANAFNNALDAIQEGFDATNSALVKIQAVVNANAEALNNLLQQLSNRF) is heptad repeat 1. Residues 1043–1087 (QAVVNANAEALNNLLQQLSNRFGAISSSLQEILSRLDALEAQAQI) are a coiled coil. Residues Asn1194, Asn1224, Asn1234, Asn1253, Asn1267, and Asn1288 are each glycosylated (N-linked (GlcNAc...) asparagine; by host). Residues 1258-1296 (APDLSLDYINVTFLDLQDEMNRLQEAIKVLNQSYINLKD) form a heptad repeat 2 region. A coiled-coil region spans residues 1269-1297 (TFLDLQDEMNRLQEAIKVLNQSYINLKDI). The chain crosses the membrane as a helical span at residues 1308–1328 (WYVWLLIGFAGVAMLVLLFFI). Topologically, residues 1329-1363 (CCCTGCGTSCFKICGGCCDDYTGHQELVIKTSHDD) are cytoplasmic. The KxHxx signature appears at 1359–1363 (TSHDD).

The protein belongs to the betacoronaviruses spike protein family. As to quaternary structure, homotrimer; each monomer consists of a S1 and a S2 subunit. The resulting peplomers protrude from the virus surface as spikes. In terms of processing, specific enzymatic cleavages in vivo yield mature proteins. The precursor is processed into S1 and S2 by host cell furin or another cellular protease to yield the mature S1 and S2 proteins. Additionally, a second cleavage leads to the release of a fusion peptide after viral attachment to host cell receptor. Post-translationally, the cytoplasmic Cys-rich domain is palmitoylated. Spike glycoprotein is digested within host endosomes.

The protein resides in the virion membrane. Its subcellular location is the host endoplasmic reticulum-Golgi intermediate compartment membrane. It is found in the host cell membrane. Functionally, attaches the virion to the cell membrane by interacting with host receptor, initiating the infection. Its function is as follows. Mediates fusion of the virion and cellular membranes by acting as a class I viral fusion protein. Under the current model, the protein has at least three conformational states: pre-fusion native state, pre-hairpin intermediate state, and post-fusion hairpin state. During viral and target cell membrane fusion, the coiled coil regions (heptad repeats) assume a trimer-of-hairpins structure, positioning the fusion peptide in close proximity to the C-terminal region of the ectodomain. The formation of this structure appears to drive apposition and subsequent fusion of viral and target cell membranes. In terms of biological role, acts as a viral fusion peptide which is unmasked following S2 cleavage occurring upon virus endocytosis. The polypeptide is Spike glycoprotein (Bovine coronavirus (strain vaccine) (BCoV)).